Here is a 345-residue protein sequence, read N- to C-terminus: MQMDERKKKILRAIVQDYISTAEPVGSRTIARKFDLGISPATIRNEMSDMEELGLIEQPHTSAGRIPSDAGYRYYVDCLLEKSSIADDVKDVIEKETTKRIAEIQTVIAHSSKLLSELTHLTSIVIGPDKGKSAFNQMHFLPYEPGKAIMVVVKENGVVENQIVEIGENVTAEELQRIANVFNHKMRGHSMEEVKRDMLHEIYSELTRQRFLIDNALELLSAVLSNSPEESSKVYLGGTLNMLNQPEFRDVEKIRNLFQIFEEGAQIIKVLHPQKEGLAVTIGGENKLKELRDCSIITGTYWIDGEPLGTIGLIGPTRMDYGKAMAMVDYMTRTLTELLTVRRRN.

This sequence belongs to the HrcA family.

Negative regulator of class I heat shock genes (grpE-dnaK-dnaJ and groELS operons). Prevents heat-shock induction of these operons. The sequence is that of Heat-inducible transcription repressor HrcA from Desulfitobacterium hafniense (strain DSM 10664 / DCB-2).